The following is a 356-amino-acid chain: GTPase Obg (356 aa).

Residues 1-159 enclose the Obg domain; the sequence is MKFIDRVKIH…RWLRLELKLL (159 aa). The 172-residue stretch at 160–331 folds into the OBG-type G domain; sequence ADVGLLGMPN…LVAEVARELE (172 aa). Residues 166-173, 191-195, 213-216, 283-286, and 312-314 each bind GTP; these read GMPNAGKS, FTTLV, DIPG, SKID, and SAV. Mg(2+) is bound by residues Ser173 and Thr193.

Belongs to the TRAFAC class OBG-HflX-like GTPase superfamily. OBG GTPase family. Monomer. Requires Mg(2+) as cofactor.

The protein localises to the cytoplasm. Functionally, an essential GTPase which binds GTP, GDP and possibly (p)ppGpp with moderate affinity, with high nucleotide exchange rates and a fairly low GTP hydrolysis rate. Plays a role in control of the cell cycle, stress response, ribosome biogenesis and in those bacteria that undergo differentiation, in morphogenesis control. The sequence is that of GTPase Obg from Syntrophotalea carbinolica (strain DSM 2380 / NBRC 103641 / GraBd1) (Pelobacter carbinolicus).